Here is an 84-residue protein sequence, read N- to C-terminus: MTTGLDAARKQEIKEIVCDILEIDEDEVTETSLFKEQHDADSLRAIEILAALERTQKVTIDQAELSRMVNLEGVYVVVSEAAQN.

The region spanning 7 to 82 (AARKQEIKEI…GVYVVVSEAA (76 aa)) is the Carrier domain. Position 42 is an O-(pantetheine 4'-phosphoryl)serine (Ser-42).

In terms of processing, 4'-phosphopantetheine is transferred from CoA to a specific serine of the apo-ACP-like protein.

Its function is as follows. Acyl carrier protein. The protein is Polyketide-8 synthase acyl carrier protein 1 of Streptomyces avermitilis (strain ATCC 31267 / DSM 46492 / JCM 5070 / NBRC 14893 / NCIMB 12804 / NRRL 8165 / MA-4680).